Here is a 201-residue protein sequence, read N- to C-terminus: dTTP/UTP pyrophosphatase (201 aa).

The active-site Proton acceptor is Asp81.

Belongs to the Maf family. YhdE subfamily. A divalent metal cation is required as a cofactor.

Its subcellular location is the cytoplasm. The enzyme catalyses dTTP + H2O = dTMP + diphosphate + H(+). It catalyses the reaction UTP + H2O = UMP + diphosphate + H(+). In terms of biological role, nucleoside triphosphate pyrophosphatase that hydrolyzes dTTP and UTP. May have a dual role in cell division arrest and in preventing the incorporation of modified nucleotides into cellular nucleic acids. The polypeptide is dTTP/UTP pyrophosphatase (Bordetella avium (strain 197N)).